Consider the following 318-residue polypeptide: NADH-ubiquinone oxidoreductase chain 1 (318 aa).

Helical transmembrane passes span 2–22, 69–89, 100–120, 146–166, 171–191, 222–242, 253–273, and 294–314; these read PVIN…FLML, ILYI…WTPL, LGLL…LWSG, LALI…STLI, HSWL…STLA, LFFM…AMIF, ELHT…FLWI, and LPLT…TSGI.

The protein belongs to the complex I subunit 1 family. In terms of assembly, core subunit of respiratory chain NADH dehydrogenase (Complex I) which is composed of 45 different subunits.

It is found in the mitochondrion inner membrane. The enzyme catalyses a ubiquinone + NADH + 5 H(+)(in) = a ubiquinol + NAD(+) + 4 H(+)(out). In terms of biological role, core subunit of the mitochondrial membrane respiratory chain NADH dehydrogenase (Complex I) which catalyzes electron transfer from NADH through the respiratory chain, using ubiquinone as an electron acceptor. Essential for the catalytic activity and assembly of complex I. The polypeptide is NADH-ubiquinone oxidoreductase chain 1 (MT-ND1) (Pongo pygmaeus (Bornean orangutan)).